A 520-amino-acid polypeptide reads, in one-letter code: MELASAHLHKGQVPWFGLLLTASLLASWSPPTTAQVTVMAFPLHAAEGNNVILVVYNMMKGVSAFSWHKGSTTSTNAEIVRFVTGTNKTIKGPVHSGRETLYSNGSLLIQRVTMKDTGVYTIEMTDQNYRRRVLTGQFHVHTLLLKSNITSNNSNPVEGDDSVSLTCDSYTDPDNITYLWSRNGESLSEGDRLKLSEGNRTLTLLNVTRNDTGPYVCETRNPVSVNRSDPFSLNIIYGPDTPIISPSDIYLHPGSNLNLSCHAASNPPAQYFWLINEKPHASSQELFIPNITTNNSGTYTCFVNNSVTGLSRTTVKNITVLEPVTQPSLQVTNTTVKELDSVTLTCLSKDRQAHIHWIFNNDTLLITEKMTTSQAGLILKIDPIKREDAGEYQCEISNPVSVKRSNSIKLEVIFDSTYDISDVPIAVIITGAVAGVILIAGLAYRLCSRKSRWGSDQRDLTEHKPSASNHNLAPSDNSPNKVDDVAYTVLNFNSQQPNRPTSAPSSPRATETVYSEVKKK.

Residues 1–34 (MELASAHLHKGQVPWFGLLLTASLLASWSPPTTA) form the signal peptide. Residues 35-141 (QVTVMAFPLH…RVLTGQFHVH (107 aa)) enclose the Ig-like V-type domain. Residues 35–422 (QVTVMAFPLH…IFDSTYDISD (388 aa)) are Extracellular-facing. 16 N-linked (GlcNAc...) asparagine glycosylation sites follow: Asn87, Asn104, Asn148, Asn152, Asn175, Asn199, Asn206, Asn210, Asn226, Asn258, Asn290, Asn294, Asn304, Asn317, Asn333, and Asn361. 3 Ig-like C2-type domains span residues 145-234 (LKSN…FSLN), 239-319 (PDTP…KNIT), and 327-411 (PSLQ…IKLE). The cysteines at positions 167 and 217 are disulfide-linked. Cys261 and Cys301 form a disulfide bridge. Cys346 and Cys394 are joined by a disulfide. Residues 423-443 (VPIAVIITGAVAGVILIAGLA) traverse the membrane as a helical segment. Residues 444 to 520 (YRLCSRKSRW…ETVYSEVKKK (77 aa)) are Cytoplasmic-facing. Residues 457–520 (QRDLTEHKPS…ETVYSEVKKK (64 aa)) are disordered. Over residues 466-480 (SASNHNLAPSDNSPN) the composition is skewed to polar residues. Tyr487 is modified (phosphotyrosine). The span at 490–513 (LNFNSQQPNRPTSAPSSPRATETV) shows a compositional bias: polar residues. Phosphoserine is present on Ser502. The residue at position 514 (Tyr514) is a Phosphotyrosine.

This sequence belongs to the immunoglobulin superfamily. CEA family. Interacts weakly with MHV spike protein in tissue culture. Isoform 2 is detected in elongating spermatids within the seminiferous epithelium (at protein level). Expressed in kidney, colon, uterus, gut mononuclear cells, crypt epithelia of intestinal tissues, and to a lesser extent, in spleen. Expressed in brain including VMH, globus pallidus, ventral pallidum, striatum, olfactory bulb and hippocampus. Also detected in rectal carcinoma cell line CMT93. Isoform 2 and isoform 3 are expressed in testis. Isoform 2 is detected in seminiferous tubule, not detected in epididymal spermatozoa. Also not observed on spermatogonia, spermatocytes, round spermatids or somatic Sertoli cells. During stages I-VII of spermatogenesis, detected on the elongating spermatids. At spermiation (stage VIII) and subsequent stages IX-XII, levels are drastically reduced or absent in the seminiferous tubules. Sometimes weakly detected in the apical region of stage-VIII seminiferous epithelium. Isoform 2 level is very low in stomach, kidney, intestine, liver and spleen.

It is found in the cell membrane. Functionally, controls energy balance and peripheral insulin action. Involved in the regulation of feeding behavior particularly in the ventromedial nucleus of hypothalamus (VMH) regulation of food intake. Has a role in the regulation of metabolic rate and insulin sensitivity or resistance via effects on brown adipogenesis, sympathetic nervous outflow to brown adipose tissue, spontaneous activity and energy expenditure in skeletal muscle. In case of murine coronavirus (MHV) infection, does probably not serve as functional receptor for the virus. Isoform 2 may be an adhesion molecule contributing to cell to cell adhesion between elongating spermatids and Sertoli cells within the seminiferous epithelium. The chain is Cell adhesion molecule CEACAM2 from Mus musculus (Mouse).